The primary structure comprises 260 residues: CD40 ligand (260 aa).

Topologically, residues 1–22 (MIETYSQTAPRSVATGPPVSMK) are cytoplasmic. Residues 23–46 (IFMYLLTVFLITQMIGSALFAVYL) form a helical; Signal-anchor for type II membrane protein membrane-spanning segment. Residues 47-260 (HRRLDKIEDE…GFTSFGLLKL (214 aa)) lie on the Extracellular side of the membrane. Residues 121–260 (IAAHVISEAS…GFTSFGLLKL (140 aa)) enclose the THD domain. Cysteines 177 and 217 form a disulfide. The N-linked (GlcNAc...) asparagine glycan is linked to Asn-239.

Belongs to the tumor necrosis factor family. In terms of assembly, homotrimer. Interacts with CD28. CD40 ligand, soluble form: Exists as either a monomer or a homotrimer. Forms a ternary complex between CD40 and integrins for CD40-CD40LG signaling. Post-translationally, the soluble form derives from the membrane form by proteolytic processing.

The protein localises to the cell membrane. It is found in the cell surface. Its subcellular location is the secreted. Its function is as follows. Cytokine that acts as a ligand to CD40/TNFRSF5. Costimulates T-cell proliferation and cytokine production. Its cross-linking on T-cells generates a costimulatory signal which enhances the production of IL4 and IL10 in conjunction with the TCR/CD3 ligation and CD28 costimulation. Induces the activation of NF-kappa-B. Induces the activation of kinases MAPK8 and PAK2 in T-cells. Mediates B-cell proliferation in the absence of co-stimulus as well as IgE production in the presence of IL4. Involved in immunoglobulin class switching. Acts as a ligand for integrins, specifically ITGA5:ITGB1 and ITGAV:ITGB3; both integrins and the CD40 receptor are required for activation of CD40-CD40LG signaling, which have cell-type dependent effects, such as B-cell activation, NF-kappa-B signaling and anti-apoptotic signaling. In Canis lupus familiaris (Dog), this protein is CD40 ligand (CD40LG).